An 87-amino-acid polypeptide reads, in one-letter code: Small cysteine-rich outer membrane protein omcA (87 aa).

An N-terminal signal peptide occupies residues 1 to 19; it reads MKKAVLLATVFCGVVGLTS. Cys20 carries N-palmitoyl cysteine lipidation. Cys20 carries the S-diacylglycerol cysteine lipid modification.

In terms of assembly, part of a disulfide cross-linked outer membrane complex (COMC) composed of the major outer membrane porin (MOMP), the small cysteine-rich protein (omcA) and the large cysteine-rich periplasmic protein (omcB). Post-translationally, N-terminal amide-linked and S-diacylglycerol cysteine-linked to 16:0, 18:0, 15:0 branched, and 17:0 branched fatty acids (ratio 6:5:3:4) in the EB stage. The exact distribution of fatty acids has not been determined. The N-terminus is blocked.

The protein resides in the cell outer membrane. Its function is as follows. In elementary bodies (EBs, the infectious stage, which is able to survive outside the host cell) provides the structural integrity of the outer envelope through disulfide cross-links with the large cysteine-rich periplasmic protein and the major outer membrane porin. It has been described in publications as the Sarkosyl-insoluble COMC (Chlamydia outer membrane complex), and serves as the functional equivalent of peptidoglycan. The chain is Small cysteine-rich outer membrane protein omcA (omcA) from Chlamydia psittaci (Chlamydophila psittaci).